A 215-amino-acid chain; its full sequence is 3-dehydroquinate dehydratase (215 aa).

3-dehydroquinate contacts are provided by residues 27–29 (EVR) and Arg-54. His-112 functions as the Proton donor/acceptor in the catalytic mechanism. Residue Lys-139 is the Schiff-base intermediate with substrate of the active site. 3-dehydroquinate-binding residues include Arg-176 and Gln-198.

The protein belongs to the type-I 3-dehydroquinase family. In terms of assembly, homodimer.

The catalysed reaction is 3-dehydroquinate = 3-dehydroshikimate + H2O. It functions in the pathway metabolic intermediate biosynthesis; chorismate biosynthesis; chorismate from D-erythrose 4-phosphate and phosphoenolpyruvate: step 3/7. Functionally, involved in the third step of the chorismate pathway, which leads to the biosynthesis of aromatic amino acids. Catalyzes the cis-dehydration of 3-dehydroquinate (DHQ) and introduces the first double bond of the aromatic ring to yield 3-dehydroshikimate. This chain is 3-dehydroquinate dehydratase, found in Thermococcus onnurineus (strain NA1).